The primary structure comprises 377 residues: Probable protein phosphatase 2C 61 (377 aa).

The region spanning 30-338 (AAGEFSMAAA…DDITAVVVFL (309 aa)) is the PPM-type phosphatase domain. Asp-64, Gly-65, Asp-269, and Asp-329 together coordinate Mn(2+).

This sequence belongs to the PP2C family. Mg(2+) is required as a cofactor. It depends on Mn(2+) as a cofactor.

It catalyses the reaction O-phospho-L-seryl-[protein] + H2O = L-seryl-[protein] + phosphate. The catalysed reaction is O-phospho-L-threonyl-[protein] + H2O = L-threonyl-[protein] + phosphate. This Oryza sativa subsp. japonica (Rice) protein is Probable protein phosphatase 2C 61.